The primary structure comprises 71 residues: Venom peptide 2-long (71 aa).

The first 24 residues, 1–24, serve as a signal peptide directing secretion; the sequence is MKQSIIIALFATIAVMACLQMVAA. AXPX repeat units follow at residues 24–27, 32–35, 44–47, 50–53, and 54–57; these read AVPA, AAPG, ASPE, and AEPI. A propeptide spanning residues 25–54 is cleaved from the precursor; that stretch reads VPAPVPEAAPGPVAEAEAYASPEALASPEA. L68 carries the leucine amide modification.

The protein belongs to the MCD family. Protonectin subfamily. Expressed by the venom gland.

It is found in the secreted. Its subcellular location is the target cell membrane. In terms of biological role, antimicrobial peptide with strong activity against the fungus B.cinerea (MIC=0.5 ug/ml), and poor activities against the fungus C.albicans (MIC=100 ug/ml), the Gram-positive bacterium S.aureus (MIC=125 ug/ml) and the Gram-negative bacterium E.coli (MIC=125 ug/ml). Its function is as follows. Antimicrobial peptide with strong activity against the fungus B.cinerea (MIC=0.4 uM), and poor activities against the fungus C.albicans (MIC=16 uM), the Gram-positive bacterium S.aureus (MIC=20 uM) and the Gram-negative bacterium E.coli (MIC=79 uM). Shows cytolytic activity against insect cell lines. Has potent hemolytic activity against ovine erythrocytes. Has potent hemolytic activity against human erythrocytes (EC(50)=31 uM). In vivo, peptide injection in the vicinity of the head and thorax of lepidopteran larvae induces feeding disorder followed by death due to starvation. This chain is Venom peptide 2-long, found in Orancistrocerus drewseni (Solitary wasp).